Here is a 96-residue protein sequence, read N- to C-terminus: NADH-ubiquinone oxidoreductase chain 6 (96 aa).

Transmembrane regions (helical) follow at residues 24–44 and 48–68; these read MSLLLLLLIMSLCAVLWLGSI and WFAYILFIVYIGGILVLFIYV.

The protein belongs to the complex I subunit 6 family.

It is found in the mitochondrion membrane. The catalysed reaction is a ubiquinone + NADH + 5 H(+)(in) = a ubiquinol + NAD(+) + 4 H(+)(out). Functionally, core subunit of the mitochondrial membrane respiratory chain NADH dehydrogenase (Complex I) that is believed to belong to the minimal assembly required for catalysis. Complex I functions in the transfer of electrons from NADH to the respiratory chain. The immediate electron acceptor for the enzyme is believed to be ubiquinone. In Albinaria turrita (Door snail), this protein is NADH-ubiquinone oxidoreductase chain 6 (ND6).